Reading from the N-terminus, the 349-residue chain is tRNA N6-adenosine threonylcarbamoyltransferase (349 aa).

Fe cation-binding residues include His118 and His122. Substrate contacts are provided by residues 141 to 145 (LVSGG), Asp174, Gly187, and Asn280. Asp308 lines the Fe cation pocket.

The protein belongs to the KAE1 / TsaD family. It depends on Fe(2+) as a cofactor.

It localises to the cytoplasm. It catalyses the reaction L-threonylcarbamoyladenylate + adenosine(37) in tRNA = N(6)-L-threonylcarbamoyladenosine(37) in tRNA + AMP + H(+). Functionally, required for the formation of a threonylcarbamoyl group on adenosine at position 37 (t(6)A37) in tRNAs that read codons beginning with adenine. Is involved in the transfer of the threonylcarbamoyl moiety of threonylcarbamoyl-AMP (TC-AMP) to the N6 group of A37, together with TsaE and TsaB. TsaD likely plays a direct catalytic role in this reaction. This is tRNA N6-adenosine threonylcarbamoyltransferase from Acidovorax sp. (strain JS42).